Here is a 317-residue protein sequence, read N- to C-terminus: Petrobactin-binding protein YclQ (317 aa).

Residues 1 to 19 form the signal peptide; that stretch reads MKKFALLFIALVTAVVISA. A lipid anchor (N-palmitoyl cysteine) is attached at C20. C20 carries S-diacylglycerol cysteine lipidation. A Fe/B12 periplasmic-binding domain is found at 56–317; sequence KVVVFDFGSL…IKEVKDGLEK (262 aa).

The protein belongs to the bacterial solute-binding protein 8 family. As to quaternary structure, the complex is composed of two ATP-binding proteins (YclP), two transmembrane proteins (YclN and YclO) and a solute-binding protein (YclQ). Interacts with FloT.

Its subcellular location is the cell membrane. It localises to the membrane raft. In terms of biological role, part of the ABC transporter complex YclNOPQ involved in uptake of ferric-petrobactin. Petrobactin is a photoreactive 3,4-catecholate siderophore produced by many members of the B.cereus group, including B.anthracis. Binds selectively iron-free and ferric petrobactin and the petrobactin precursor 3,4-dihydroxybenzoic acid (3,4-DHB). This Bacillus subtilis (strain 168) protein is Petrobactin-binding protein YclQ (yclQ).